Reading from the N-terminus, the 178-residue chain is MSRIGYKVIELPAGVEVSQAGEVVTVKGPKGTLTRNIASDITMTVEGNEVKFTRPSDDYKMKALHGTTRANVNNMVEGVTKGFTKNLQLVGVGYRAQLQGKKLVLSVGYSHPVEFATPENLTVEVPDNTHINISGIGKQAVGDFAAEVRAVRSPEPYKGKGIRYVDEYVRRKEGKTGK.

It belongs to the universal ribosomal protein uL6 family. As to quaternary structure, part of the 50S ribosomal subunit.

This protein binds to the 23S rRNA, and is important in its secondary structure. It is located near the subunit interface in the base of the L7/L12 stalk, and near the tRNA binding site of the peptidyltransferase center. This chain is Large ribosomal subunit protein uL6, found in Lactiplantibacillus plantarum (strain ATCC BAA-793 / NCIMB 8826 / WCFS1) (Lactobacillus plantarum).